The sequence spans 273 residues: Shikimate dehydrogenase (NADP(+)) (273 aa).

Shikimate is bound by residues 14-16 and Thr-61; that span reads SKS. Residue Lys-65 is the Proton acceptor of the active site. Shikimate is bound by residues Asn-86 and Asp-102. Residues 126 to 130, 150 to 155, and Met-213 each bind NADP(+); these read GAGGA and NRTHAR. Tyr-215 is a shikimate binding site. NADP(+) is bound at residue Gly-237.

Belongs to the shikimate dehydrogenase family. As to quaternary structure, homodimer.

The catalysed reaction is shikimate + NADP(+) = 3-dehydroshikimate + NADPH + H(+). It functions in the pathway metabolic intermediate biosynthesis; chorismate biosynthesis; chorismate from D-erythrose 4-phosphate and phosphoenolpyruvate: step 4/7. Involved in the biosynthesis of the chorismate, which leads to the biosynthesis of aromatic amino acids. Catalyzes the reversible NADPH linked reduction of 3-dehydroshikimate (DHSA) to yield shikimate (SA). The protein is Shikimate dehydrogenase (NADP(+)) of Aeromonas hydrophila subsp. hydrophila (strain ATCC 7966 / DSM 30187 / BCRC 13018 / CCUG 14551 / JCM 1027 / KCTC 2358 / NCIMB 9240 / NCTC 8049).